The chain runs to 388 residues: Pepsin A-3 (388 aa).

The signal sequence occupies residues 1–15; that stretch reads MKWLLLLGLVALSEC. Residues 16–62 constitute a propeptide, activation peptide; that stretch reads IMYKVPLIRKKSLRRTLSERGLLKDFLKKHNLNPARKYFPQWKAPTL. Residues 76–385 enclose the Peptidase A1 domain; the sequence is YFGTIGIGTP…DRANNQVGLA (310 aa). D94 is an active-site residue. Cystine bridges form between C107-C112 and C268-C272. The active site involves D277. A disulfide bridge links C311 with C344.

Belongs to the peptidase A1 family.

It localises to the secreted. It catalyses the reaction Preferential cleavage: hydrophobic, preferably aromatic, residues in P1 and P1' positions. Cleaves 1-Phe-|-Val-2, 4-Gln-|-His-5, 13-Glu-|-Ala-14, 14-Ala-|-Leu-15, 15-Leu-|-Tyr-16, 16-Tyr-|-Leu-17, 23-Gly-|-Phe-24, 24-Phe-|-Phe-25 and 25-Phe-|-Tyr-26 bonds in the B chain of insulin.. Shows particularly broad specificity; although bonds involving phenylalanine and leucine are preferred, many others are also cleaved to some extent. This Homo sapiens (Human) protein is Pepsin A-3 (PGA3).